A 397-amino-acid chain; its full sequence is RNA pseudouridine synthase 5 (397 aa).

The region spanning A64–L114 is the S4 RNA-binding domain.

It belongs to the pseudouridine synthase RluA family.

It catalyses the reaction a uridine in RNA = a pseudouridine in RNA. This is RNA pseudouridine synthase 5 from Oryza sativa subsp. japonica (Rice).